A 205-amino-acid polypeptide reads, in one-letter code: Guanylate kinase (205 aa).

One can recognise a Guanylate kinase-like domain in the interval 7–185 (GNIFIISAAS…AEGDLLHIVN (179 aa)). 14 to 21 (AASGTGKT) provides a ligand contact to ATP.

The protein belongs to the guanylate kinase family.

It is found in the cytoplasm. The enzyme catalyses GMP + ATP = GDP + ADP. Essential for recycling GMP and indirectly, cGMP. The sequence is that of Guanylate kinase from Neisseria gonorrhoeae (strain ATCC 700825 / FA 1090).